Here is a 200-residue protein sequence, read N- to C-terminus: Small ribosomal subunit protein eS1 (200 aa).

It belongs to the eukaryotic ribosomal protein eS1 family. In terms of assembly, part of the 30S ribosomal subunit.

The polypeptide is Small ribosomal subunit protein eS1 (Thermococcus kodakarensis (strain ATCC BAA-918 / JCM 12380 / KOD1) (Pyrococcus kodakaraensis (strain KOD1))).